A 240-amino-acid chain; its full sequence is Phosphoribosylaminoimidazole-succinocarboxamide synthase (240 aa).

The protein belongs to the SAICAR synthetase family.

The catalysed reaction is 5-amino-1-(5-phospho-D-ribosyl)imidazole-4-carboxylate + L-aspartate + ATP = (2S)-2-[5-amino-1-(5-phospho-beta-D-ribosyl)imidazole-4-carboxamido]succinate + ADP + phosphate + 2 H(+). The protein operates within purine metabolism; IMP biosynthesis via de novo pathway; 5-amino-1-(5-phospho-D-ribosyl)imidazole-4-carboxamide from 5-amino-1-(5-phospho-D-ribosyl)imidazole-4-carboxylate: step 1/2. The chain is Phosphoribosylaminoimidazole-succinocarboxamide synthase from Wolbachia sp. subsp. Brugia malayi (strain TRS).